Here is a 604-residue protein sequence, read N- to C-terminus: Lipid-A-disaccharide synthase (604 aa).

The unknown stretch occupies residues 1 to 220 (MIPSGLVYLL…YKEQRSTPYL (220 aa)). The lipid-A-disaccharide synthase stretch occupies residues 221–604 (DTHCFLSAGE…KRIFDTLPAV (384 aa)).

The protein in the C-terminal section; belongs to the LpxB family.

The enzyme catalyses a lipid X + a UDP-2-N,3-O-bis[(3R)-3-hydroxyacyl]-alpha-D-glucosamine = a lipid A disaccharide + UDP + H(+). It functions in the pathway bacterial outer membrane biogenesis; LPS lipid A biosynthesis. In terms of biological role, condensation of UDP-2,3-diacylglucosamine and 2,3-diacylglucosamine-1-phosphate to form lipid A disaccharide, a precursor of lipid A, a phosphorylated glycolipid that anchors the lipopolysaccharide to the outer membrane of the cell. The polypeptide is Lipid-A-disaccharide synthase (lpxB) (Chlamydia pneumoniae (Chlamydophila pneumoniae)).